Reading from the N-terminus, the 240-residue chain is Probable transcriptional regulatory protein PBPRB1582 (240 aa).

The protein belongs to the TACO1 family.

The protein resides in the cytoplasm. In Photobacterium profundum (strain SS9), this protein is Probable transcriptional regulatory protein PBPRB1582.